The sequence spans 318 residues: Protoheme IX farnesyltransferase (318 aa).

Helical transmembrane passes span 27 to 47, 52 to 72, 103 to 123, 124 to 144, 152 to 172, 179 to 199, 225 to 245, 248 to 268, and 288 to 308; these read IMML…GMTG, PAMA…AGAI, LTMG…ASNW, LAAA…TMWL, IVIG…AVTG, WILF…LSLL, ILVY…TGLG, IYGA…VAIL, and AFLF…VEHA.

This sequence belongs to the UbiA prenyltransferase family. Protoheme IX farnesyltransferase subfamily. Interacts with CtaA.

It is found in the cell inner membrane. It carries out the reaction heme b + (2E,6E)-farnesyl diphosphate + H2O = Fe(II)-heme o + diphosphate. It participates in porphyrin-containing compound metabolism; heme O biosynthesis; heme O from protoheme: step 1/1. Converts heme B (protoheme IX) to heme O by substitution of the vinyl group on carbon 2 of heme B porphyrin ring with a hydroxyethyl farnesyl side group. This is Protoheme IX farnesyltransferase from Hyphomonas neptunium (strain ATCC 15444).